We begin with the raw amino-acid sequence, 245 residues long: tRNA pseudouridine synthase A (245 aa).

Residue aspartate 52 is the Nucleophile of the active site. Residue tyrosine 110 coordinates substrate.

It belongs to the tRNA pseudouridine synthase TruA family. Homodimer.

It catalyses the reaction uridine(38/39/40) in tRNA = pseudouridine(38/39/40) in tRNA. Functionally, formation of pseudouridine at positions 38, 39 and 40 in the anticodon stem and loop of transfer RNAs. This is tRNA pseudouridine synthase A from Ruminiclostridium cellulolyticum (strain ATCC 35319 / DSM 5812 / JCM 6584 / H10) (Clostridium cellulolyticum).